Reading from the N-terminus, the 191-residue chain is uncharacterized protein (191 aa).

This is an uncharacterized protein from Schizosaccharomyces pombe (strain 972 / ATCC 24843) (Fission yeast).